The sequence spans 236 residues: Ureidoacrylate amidohydrolase RutB (236 aa).

The active-site Proton acceptor is the aspartate 24. The active site involves lysine 133. Cysteine 166 acts as the Nucleophile in catalysis.

The protein belongs to the isochorismatase family. RutB subfamily.

It carries out the reaction (Z)-3-ureidoacrylate + H2O + H(+) = (Z)-3-aminoacrylate + NH4(+) + CO2. The catalysed reaction is (Z)-3-ureidoacrylate + H2O = (Z)-3-aminoacrylate + carbamate + H(+). It catalyses the reaction (Z)-2-methylureidoacrylate + H2O + H(+) = (Z)-2-methylaminoacrylate + NH4(+) + CO2. Functionally, hydrolyzes ureidoacrylate to form aminoacrylate and carbamate. The carbamate hydrolyzes spontaneously, thereby releasing one of the nitrogen atoms of the pyrimidine ring as ammonia and one of its carbon atoms as CO2. This chain is Ureidoacrylate amidohydrolase RutB, found in Klebsiella variicola (strain At-22).